We begin with the raw amino-acid sequence, 246 residues long: 1-(5-phosphoribosyl)-5-[(5-phosphoribosylamino)methylideneamino] imidazole-4-carboxamide isomerase (246 aa).

Asp8 serves as the catalytic Proton acceptor. Asp131 serves as the catalytic Proton donor.

It belongs to the HisA/HisF family.

Its subcellular location is the cytoplasm. It catalyses the reaction 1-(5-phospho-beta-D-ribosyl)-5-[(5-phospho-beta-D-ribosylamino)methylideneamino]imidazole-4-carboxamide = 5-[(5-phospho-1-deoxy-D-ribulos-1-ylimino)methylamino]-1-(5-phospho-beta-D-ribosyl)imidazole-4-carboxamide. It participates in amino-acid biosynthesis; L-histidine biosynthesis; L-histidine from 5-phospho-alpha-D-ribose 1-diphosphate: step 4/9. The chain is 1-(5-phosphoribosyl)-5-[(5-phosphoribosylamino)methylideneamino] imidazole-4-carboxamide isomerase from Lactococcus lactis subsp. cremoris (strain SK11).